Consider the following 364-residue polypeptide: Paraneoplastic antigen Ma2 homolog (364 aa).

The residue at position 2 (alanine 2) is an N-acetylalanine. The segment covering 335–353 has biased composition (acidic residues); the sequence is EEEEASFENESIEEPEEGD. A disordered region spans residues 335–364; that stretch reads EEEEASFENESIEEPEEGDGYGGWNHEGDD. Over residues 354–364 the composition is skewed to gly residues; that stretch reads GYGGWNHEGDD.

It belongs to the PNMA family.

The protein resides in the nucleus. It localises to the nucleolus. The sequence is that of Paraneoplastic antigen Ma2 homolog (PNMA2) from Macaca fascicularis (Crab-eating macaque).